We begin with the raw amino-acid sequence, 170 residues long: Peptide deformylase (170 aa).

Fe cation is bound by residues Cys-91 and His-133. The active site involves Glu-134. Residue His-137 coordinates Fe cation.

The protein belongs to the polypeptide deformylase family. Requires Fe(2+) as cofactor.

It catalyses the reaction N-terminal N-formyl-L-methionyl-[peptide] + H2O = N-terminal L-methionyl-[peptide] + formate. Removes the formyl group from the N-terminal Met of newly synthesized proteins. Requires at least a dipeptide for an efficient rate of reaction. N-terminal L-methionine is a prerequisite for activity but the enzyme has broad specificity at other positions. The protein is Peptide deformylase of Actinobacillus pleuropneumoniae serotype 7 (strain AP76).